We begin with the raw amino-acid sequence, 332 residues long: MPCPRLPWLRRHRTSQGSGPSSPSTVSAPNSPSRGEDEDAEEEEGDGTPGSGPILPPTSPMECLICVSPFDGIFKLPKRLDCGHVFCLECLARLSLATAGGGDAVACPMCRAPTRLAPRRGLPALPTQPGLLPRDARAPLPRQGSVRFDRRRGLLYLRPPPPSPGPRKSRTVRAPPPPPPLRLGRPLSRRLSLSSPAWAFNAAVALAVLVAAGLVVSGVYIFFLIPHVTNSGVRPQTVALAPENDFWVSPRPTPVAPWTHAWTRRPTKPDLDLDDTLPEATKDTPELEEATKDPVETQGIPDLPPDQTPKAEIDLNWNPKAQADGKKVQLQQ.

The interval 1-55 (MPCPRLPWLRRHRTSQGSGPSSPSTVSAPNSPSRGEDEDAEEEEGDGTPGSGPIL) is disordered. Residues 15 to 27 (SQGSGPSSPSTVS) show a composition bias toward low complexity. Acidic residues predominate over residues 36-46 (EDEDAEEEEGD). The segment at 63–111 (CLICVSPFDGIFKLPKRLDCGHVFCLECLARLSLATAGGGDAVACPMCR) adopts an RING-type zinc-finger fold. The tract at residues 121 to 187 (GLPALPTQPG…PPPLRLGRPL (67 aa)) is disordered. A helical membrane pass occupies residues 205 to 225 (ALAVLVAAGLVVSGVYIFFLI). Positions 259-332 (THAWTRRPTK…ADGKKVQLQQ (74 aa)) are disordered. Composition is skewed to basic and acidic residues over residues 280-295 (ATKD…KDPV) and 323-332 (ADGKKVQLQQ).

It localises to the membrane. The sequence is that of RING finger protein 225 from Mus musculus (Mouse).